We begin with the raw amino-acid sequence, 137 residues long: Small ribosomal subunit protein bS6 (137 aa).

A disordered region spans residues 96–137 (ITEASPMAKAKDERDTRRSSEERAPRAEATEEAEESAENTAE). Residues 104–124 (KAKDERDTRRSSEERAPRAEA) show a composition bias toward basic and acidic residues. Acidic residues predominate over residues 125-137 (TEEAEESAENTAE).

It belongs to the bacterial ribosomal protein bS6 family.

Functionally, binds together with bS18 to 16S ribosomal RNA. The chain is Small ribosomal subunit protein bS6 from Shewanella pealeana (strain ATCC 700345 / ANG-SQ1).